Here is a 398-residue protein sequence, read N- to C-terminus: Nucleotide-sugar uncharacterized transporter 2 (398 aa).

Transmembrane regions (helical) follow at residues 54–74 (FCGP…IILA), 84–104 (FNFP…LLAF), 119–139 (TTPF…SGLA), 150–170 (FYQM…FVLF), 179–199 (VMAL…DLEF), 201–221 (LFGA…KILW), 242–262 (FTVF…VLLF), 271–291 (AILI…LALG), 299–319 (VVLG…IFGS), and 322–342 (GFIS…YTWL).

It belongs to the TPT transporter family. TPT (TC 2.A.7.9) subfamily.

The protein resides in the membrane. The chain is Nucleotide-sugar uncharacterized transporter 2 from Arabidopsis thaliana (Mouse-ear cress).